Consider the following 1270-residue polypeptide: Glycine betaine reductase ATRR (1270 aa).

The adenylation (A) domain stretch occupies residues 14-418; it reads FTQQVRASPN…MIKLRGYSVV (405 aa). A Carrier domain is found at 528-605; that stretch reads KEDPIGIEDI…GHLDTVRAIR (78 aa). Position 565 is an O-(pantetheine 4'-phosphoryl)serine (S565). Residues 643 to 937 form a carboxylic acid reductase domain R1 region; the sequence is KTVLLTGVTG…EPLSWDDWVA (295 aa). Residues 1026-1256 form an aldehyde reductase domain R2 region; that stretch reads PLSGKVAVVT…IYALRQPEHV (231 aa).

The protein belongs to the NRP synthetase family.

The tetramethylammonium ion, which mimics the head group of glycine betaine, acts as a competitive inhibitor of ATRR A domain, whereas the potency decreased by three orders of magnitude with dimethylammonium. Choline is a mixed inhibitor for both glycine betaine reductase and aldehyde reductase activity but more potent in competition against glycine betaine in the first reduction step. Therefore, choline could act as a feedback inhibitor to regulate ATRR enzymatic activity. The lowered binding affinity of choline to R2 favors the release of choline after glycine betaine aldehyde reduction to avoid direct product inhibition. NRPS-like enzyme with an unusual domain architecture that converts back glycine betaine to choline via a 2-step reduction mechanism, and thereby can be an alternative source of choline. Permits direct reutilization of endogenously stored glycine betaine for on-demand biosynthesis of choline and choline derivatives, including phospholipid phosphatidylcholine (PC) which has an essential role in maintaining membrane integrity and functionality, or choline-O-sulfate, a mean for intracellular sulfate storage. Glycine betaine is activated by the adenylation (A) domain, and transferred to the thiolation (T) domain. Movement of the phosphopantetheine arm to the thioester reductase domain R1 then allows thioester reduction by NADPH of glycine betainoyl thioester to glycine betaine aldehyde, which is in turn reduced to choline by the aldehyde reductase domain R2. In Emericella nidulans (strain FGSC A4 / ATCC 38163 / CBS 112.46 / NRRL 194 / M139) (Aspergillus nidulans), this protein is Glycine betaine reductase ATRR.